The following is a 123-amino-acid chain: Large ribosomal subunit protein bL12 (123 aa).

The protein belongs to the bacterial ribosomal protein bL12 family. As to quaternary structure, homodimer. Part of the ribosomal stalk of the 50S ribosomal subunit. Forms a multimeric L10(L12)X complex, where L10 forms an elongated spine to which 2 to 4 L12 dimers bind in a sequential fashion. Binds GTP-bound translation factors.

Forms part of the ribosomal stalk which helps the ribosome interact with GTP-bound translation factors. Is thus essential for accurate translation. In Desulfotalea psychrophila (strain LSv54 / DSM 12343), this protein is Large ribosomal subunit protein bL12.